The chain runs to 318 residues: (1S)-1,7-diacetoxy-luvungin A aldo-keto reductase (318 aa).

Tyrosine 54 functions as the Proton donor in the catalytic mechanism.

The protein belongs to the aldo/keto reductase family. In terms of tissue distribution, expressed in flowers, maturing fruits and in juice vesicles.

The enzyme catalyses (1S)-1,7-diacetoxy-luvungin A + AH2 + H2O = (1R,2R,3S,8R,10R,11R,15S,16S)-3-(acetyloxy)-15-[(4R)-4-[(2S)-3,3-dimethyloxiran-2-yl]-1,4-dihydroxybutan-2-yl]-2,7,7,11,16-pentamethyl-5-oxo-6-oxatetracyclo[9.7.0.0(2,8).0(12,16)]octadec-12-en-10-yl acetate + acetate + A + H(+). It participates in secondary metabolite biosynthesis; terpenoid biosynthesis. Aldo-keto reductase involved in the biosynthesis of limonoids triterpene natural products such as limonin, a compound with insecticidal activity responsible for the bitter taste in citrus. Can use (1S)-1,7-diacetoxy-luvungin A as substrate. The polypeptide is (1S)-1,7-diacetoxy-luvungin A aldo-keto reductase (Citrus sinensis (Sweet orange)).